Reading from the N-terminus, the 585-residue chain is Glycerol-3-phosphate dehydrogenase (585 aa).

37 to 65 (DVVVIGGGVVGSGCALDAATRGLKVALVE) is an FAD binding site.

It belongs to the FAD-dependent glycerol-3-phosphate dehydrogenase family. FAD serves as cofactor.

It localises to the cytoplasm. It catalyses the reaction a quinone + sn-glycerol 3-phosphate = dihydroxyacetone phosphate + a quinol. This is Glycerol-3-phosphate dehydrogenase (glpD) from Mycobacterium leprae (strain TN).